Reading from the N-terminus, the 267-residue chain is tRNA-cytidine(32) 2-sulfurtransferase 1 (267 aa).

Residues 42-47 (SGGKDS) carry the PP-loop motif motif. [4Fe-4S] cluster-binding residues include cysteine 117, cysteine 120, and cysteine 208.

The protein belongs to the TtcA family. In terms of assembly, homodimer. The cofactor is Mg(2+). [4Fe-4S] cluster is required as a cofactor.

The protein localises to the cytoplasm. It catalyses the reaction cytidine(32) in tRNA + S-sulfanyl-L-cysteinyl-[cysteine desulfurase] + AH2 + ATP = 2-thiocytidine(32) in tRNA + L-cysteinyl-[cysteine desulfurase] + A + AMP + diphosphate + H(+). It participates in tRNA modification. Catalyzes the ATP-dependent 2-thiolation of cytidine in position 32 of tRNA, to form 2-thiocytidine (s(2)C32). The sulfur atoms are provided by the cysteine/cysteine desulfurase (IscS) system. This Francisella tularensis subsp. tularensis (strain FSC 198) protein is tRNA-cytidine(32) 2-sulfurtransferase 1.